A 201-amino-acid chain; its full sequence is 3-isopropylmalate dehydratase small subunit (201 aa).

The protein belongs to the LeuD family. LeuD type 1 subfamily. As to quaternary structure, heterodimer of LeuC and LeuD.

The catalysed reaction is (2R,3S)-3-isopropylmalate = (2S)-2-isopropylmalate. Its pathway is amino-acid biosynthesis; L-leucine biosynthesis; L-leucine from 3-methyl-2-oxobutanoate: step 2/4. Catalyzes the isomerization between 2-isopropylmalate and 3-isopropylmalate, via the formation of 2-isopropylmaleate. The sequence is that of 3-isopropylmalate dehydratase small subunit from Shigella dysenteriae serotype 1 (strain Sd197).